A 465-amino-acid chain; its full sequence is Cysteine--tRNA ligase (465 aa).

Cys-27 contacts Zn(2+). A 'HIGH' region motif is present at residues 29–39 (PTVYNFFHIGN). Zn(2+) contacts are provided by Cys-207, His-232, and Glu-236. The short motif at 264 to 268 (KMSKS) is the 'KMSKS' region element. Position 267 (Lys-267) interacts with ATP.

Belongs to the class-I aminoacyl-tRNA synthetase family. In terms of assembly, monomer. The cofactor is Zn(2+).

The protein localises to the cytoplasm. The enzyme catalyses tRNA(Cys) + L-cysteine + ATP = L-cysteinyl-tRNA(Cys) + AMP + diphosphate. The sequence is that of Cysteine--tRNA ligase from Clostridium botulinum (strain ATCC 19397 / Type A).